Reading from the N-terminus, the 122-residue chain is S-adenosylmethionine decarboxylase proenzyme (122 aa).

Catalysis depends on S69, which acts as the Schiff-base intermediate with substrate; via pyruvic acid. Residue S69 is modified to Pyruvic acid (Ser); by autocatalysis. H74 (proton acceptor; for processing activity) is an active-site residue. The active-site Proton donor; for catalytic activity is C89.

It belongs to the prokaryotic AdoMetDC family. Type 1 subfamily. As to quaternary structure, heterotetramer of two alpha and two beta chains arranged as a dimer of alpha/beta heterodimers. The cofactor is pyruvate. Post-translationally, is synthesized initially as an inactive proenzyme. Formation of the active enzyme involves a self-maturation process in which the active site pyruvoyl group is generated from an internal serine residue via an autocatalytic post-translational modification. Two non-identical subunits are generated from the proenzyme in this reaction, and the pyruvate is formed at the N-terminus of the alpha chain, which is derived from the carboxyl end of the proenzyme. The post-translation cleavage follows an unusual pathway, termed non-hydrolytic serinolysis, in which the side chain hydroxyl group of the serine supplies its oxygen atom to form the C-terminus of the beta chain, while the remainder of the serine residue undergoes an oxidative deamination to produce ammonia and the pyruvoyl group blocking the N-terminus of the alpha chain.

It catalyses the reaction S-adenosyl-L-methionine + H(+) = S-adenosyl 3-(methylsulfanyl)propylamine + CO2. It participates in amine and polyamine biosynthesis; S-adenosylmethioninamine biosynthesis; S-adenosylmethioninamine from S-adenosyl-L-methionine: step 1/1. In terms of biological role, catalyzes the decarboxylation of S-adenosylmethionine to S-adenosylmethioninamine (dcAdoMet), the propylamine donor required for the synthesis of the polyamines spermine and spermidine from the diamine putrescine. In Sulfolobus acidocaldarius (strain ATCC 33909 / DSM 639 / JCM 8929 / NBRC 15157 / NCIMB 11770), this protein is S-adenosylmethionine decarboxylase proenzyme.